We begin with the raw amino-acid sequence, 947 residues long: Bifunctional glutamine synthetase adenylyltransferase/adenylyl-removing enzyme (947 aa).

Residues 1–440 (MTPLSSPLSQ…VFNELIGDDE (440 aa)) are adenylyl removase. Residues 450-947 (SEPWREVWQD…ASWRKWLVAV (498 aa)) form an adenylyl transferase region.

This sequence belongs to the GlnE family. Mg(2+) serves as cofactor.

It carries out the reaction [glutamine synthetase]-O(4)-(5'-adenylyl)-L-tyrosine + phosphate = [glutamine synthetase]-L-tyrosine + ADP. It catalyses the reaction [glutamine synthetase]-L-tyrosine + ATP = [glutamine synthetase]-O(4)-(5'-adenylyl)-L-tyrosine + diphosphate. Functionally, involved in the regulation of glutamine synthetase GlnA, a key enzyme in the process to assimilate ammonia. When cellular nitrogen levels are high, the C-terminal adenylyl transferase (AT) inactivates GlnA by covalent transfer of an adenylyl group from ATP to specific tyrosine residue of GlnA, thus reducing its activity. Conversely, when nitrogen levels are low, the N-terminal adenylyl removase (AR) activates GlnA by removing the adenylyl group by phosphorolysis, increasing its activity. The regulatory region of GlnE binds the signal transduction protein PII (GlnB) which indicates the nitrogen status of the cell. This Salmonella schwarzengrund (strain CVM19633) protein is Bifunctional glutamine synthetase adenylyltransferase/adenylyl-removing enzyme.